A 363-amino-acid chain; its full sequence is UDP-N-acetylglucosamine--N-acetylmuramyl-(pentapeptide) pyrophosphoryl-undecaprenol N-acetylglucosamine transferase (363 aa).

UDP-N-acetyl-alpha-D-glucosamine contacts are provided by residues 12-14 (TAG), Arg166, Ser196, and Gln291.

Belongs to the glycosyltransferase 28 family. MurG subfamily.

It localises to the cell inner membrane. It catalyses the reaction di-trans,octa-cis-undecaprenyl diphospho-N-acetyl-alpha-D-muramoyl-L-alanyl-D-glutamyl-meso-2,6-diaminopimeloyl-D-alanyl-D-alanine + UDP-N-acetyl-alpha-D-glucosamine = di-trans,octa-cis-undecaprenyl diphospho-[N-acetyl-alpha-D-glucosaminyl-(1-&gt;4)]-N-acetyl-alpha-D-muramoyl-L-alanyl-D-glutamyl-meso-2,6-diaminopimeloyl-D-alanyl-D-alanine + UDP + H(+). It functions in the pathway cell wall biogenesis; peptidoglycan biosynthesis. Cell wall formation. Catalyzes the transfer of a GlcNAc subunit on undecaprenyl-pyrophosphoryl-MurNAc-pentapeptide (lipid intermediate I) to form undecaprenyl-pyrophosphoryl-MurNAc-(pentapeptide)GlcNAc (lipid intermediate II). The protein is UDP-N-acetylglucosamine--N-acetylmuramyl-(pentapeptide) pyrophosphoryl-undecaprenol N-acetylglucosamine transferase of Legionella pneumophila (strain Paris).